Here is an 869-residue protein sequence, read N- to C-terminus: Protein translocase subunit SecA (869 aa).

Residues Q85, 103 to 107 (GEGKT), and D508 contribute to the ATP site.

The protein belongs to the SecA family. As to quaternary structure, monomer and homodimer. Part of the essential Sec protein translocation apparatus which comprises SecA, SecYEG and auxiliary proteins SecDF. Other proteins may also be involved.

Its subcellular location is the cell membrane. The protein localises to the cytoplasm. It catalyses the reaction ATP + H2O + cellular proteinSide 1 = ADP + phosphate + cellular proteinSide 2.. Functionally, part of the Sec protein translocase complex. Interacts with the SecYEG preprotein conducting channel. Has a central role in coupling the hydrolysis of ATP to the transfer of proteins into and across the cell membrane, serving as an ATP-driven molecular motor driving the stepwise translocation of polypeptide chains across the membrane. This Deinococcus deserti (strain DSM 17065 / CIP 109153 / LMG 22923 / VCD115) protein is Protein translocase subunit SecA.